A 100-amino-acid chain; its full sequence is Elicitin Vex2 (100 aa).

Disulfide bonds link C3–C71, C27–C56, and C51–C95.

This sequence belongs to the elicitin family.

It localises to the secreted. Functionally, induces local and distal defense responses (incompatible hypersensitive reaction) in plants from the solanaceae and cruciferae families. Elicits leaf necrosis and causes the accumulation of pathogenesis-related proteins. Might interact with the lipidic molecules of the plasma membrane. This Phytopythium vexans (Damping-off fungus) protein is Elicitin Vex2.